Reading from the N-terminus, the 322-residue chain is uncharacterized protein (322 aa).

Transmembrane regions (helical) follow at residues 7 to 27, 54 to 74, 87 to 107, 128 to 148, 162 to 182, 209 to 229, 249 to 269, and 287 to 307; these read IQKIAPAAIGACLFVLSIGAI, AFALMLINYIILTGYDTLAMF, FVGFVSYAISNSVGLALLSGS, IAFCNLSFWVGLLTVGGITFV, FLSVHPIGFTFLAIIGIYLLI, IGLTAVDWILASGILYVLLPG, GIISNVPGGLGVFETVVLFLL, and VIYYWIPLGSASLSLGAFELL.

To E.coli YbhN.

The protein localises to the cell membrane. This is an uncharacterized protein from Synechocystis sp. (strain ATCC 27184 / PCC 6803 / Kazusa).